A 1094-amino-acid polypeptide reads, in one-letter code: AP-3 complex subunit beta-1 (1094 aa).

Residues 1–11 (MSSNSFPYNEQ) show a composition bias toward polar residues. Disordered regions lie at residues 1-31 (MSSN…ISPS) and 268-292 (DNGK…KPYT). Phosphoserine is present on residues S276 and S609. Positions 662–811 (PAGKAKQENS…EKKTKQDRTP (150 aa)) are disordered. Residues 666–677 (AKQENSAKKFYS) are compositionally biased toward basic and acidic residues. 2 stretches are compositionally biased toward acidic residues: residues 678-696 (ESEE…ESES) and 705-726 (ESGE…EQDS). Basic and acidic residues-rich tracts occupy residues 727 to 738 (ESGRESGLENKR) and 748 to 764 (GKSD…KSKT). 2 positions are modified to phosphoserine: S750 and S752. Residues 765 to 777 (SDSSNDESSSIED) are compositionally biased toward low complexity. The segment covering 778–791 (SSSDSESESEPESE) has biased composition (acidic residues). A compositionally biased stretch (basic and acidic residues) spans 792–811 (SESRRVTKEKEKKTKQDRTP).

This sequence belongs to the adaptor complexes large subunit family. Adaptor protein complex 3 (AP-3) is a heterotetramer composed of two large adaptins (delta-type subunit AP3D1 and beta-type subunit AP3B1 or AP3B2), a medium adaptin (mu-type subunit AP3M1 or AP3M2) and a small adaptin (sigma-type subunit APS1 or AP3S2). AP-3 associates with the BLOC-1 complex. Interacts with KIF3A; interaction is direct; interaction is impaired by pyrophosphorylation of AP3B1. Phosphorylated on serine residues. In terms of processing, pyrophosphorylation by 5-diphosphoinositol pentakisphosphate (5-IP7) impairs interaction with KIF3A. Serine pyrophosphorylation is achieved by Mg(2+)-dependent, but enzyme independent transfer of a beta-phosphate from a inositol pyrophosphate to a pre-phosphorylated serine residue. Ubiquitously expressed.

It is found in the cytoplasmic vesicle. The protein localises to the clathrin-coated vesicle membrane. It localises to the golgi apparatus. Subunit of non-clathrin- and clathrin-associated adaptor protein complex 3 (AP-3) that plays a role in protein sorting in the late-Golgi/trans-Golgi network (TGN) and/or endosomes. The AP complexes mediate both the recruitment of clathrin to membranes and the recognition of sorting signals within the cytosolic tails of transmembrane cargo molecules. AP-3 appears to be involved in the sorting of a subset of transmembrane proteins targeted to lysosomes and lysosome-related organelles. In concert with the BLOC-1 complex, AP-3 is required to target cargos into vesicles assembled at cell bodies for delivery into neurites and nerve terminals. This chain is AP-3 complex subunit beta-1 (AP3B1), found in Homo sapiens (Human).